The sequence spans 569 residues: Sulfite reductase [NADPH] hemoprotein beta-component (569 aa).

4 residues coordinate [4Fe-4S] cluster: C433, C439, C478, and C482. C482 lines the siroheme pocket.

It belongs to the nitrite and sulfite reductase 4Fe-4S domain family. As to quaternary structure, alpha(8)-beta(8). The alpha component is a flavoprotein, the beta component is a hemoprotein. Siroheme is required as a cofactor. Requires [4Fe-4S] cluster as cofactor.

It catalyses the reaction hydrogen sulfide + 3 NADP(+) + 3 H2O = sulfite + 3 NADPH + 4 H(+). It functions in the pathway sulfur metabolism; hydrogen sulfide biosynthesis; hydrogen sulfide from sulfite (NADPH route): step 1/1. In terms of biological role, component of the sulfite reductase complex that catalyzes the 6-electron reduction of sulfite to sulfide. This is one of several activities required for the biosynthesis of L-cysteine from sulfate. In Buchnera aphidicola subsp. Acyrthosiphon pisum (strain 5A), this protein is Sulfite reductase [NADPH] hemoprotein beta-component.